Here is a 1295-residue protein sequence, read N- to C-terminus: Phosphoribosylformylglycinamidine synthase (1295 aa).

The segment at 304-326 (WPGAATGSGGEIRDEGATGRGAK) is disordered. ATP is bound by residues 306-317 (GAATGSGGEIRD), 385-387 (TGY), and alanine 677. Mg(2+) contacts are provided by aspartate 678, glutamate 717, asparagine 721, and aspartate 884. Positions 995–1012 (LRDNPESADQEHASRQDD) are enriched in basic and acidic residues. The disordered stretch occupies residues 995–1017 (LRDNPESADQEHASRQDDNDPGL). One can recognise a Glutamine amidotransferase type-1 domain in the interval 1042 to 1295 (VAVLREQGVN…LFRNARKQLG (254 aa)). Cysteine 1135 (nucleophile) is an active-site residue. Active-site residues include histidine 1260 and glutamate 1262.

This sequence in the N-terminal section; belongs to the FGAMS family. As to quaternary structure, monomer.

It is found in the cytoplasm. The catalysed reaction is N(2)-formyl-N(1)-(5-phospho-beta-D-ribosyl)glycinamide + L-glutamine + ATP + H2O = 2-formamido-N(1)-(5-O-phospho-beta-D-ribosyl)acetamidine + L-glutamate + ADP + phosphate + H(+). It functions in the pathway purine metabolism; IMP biosynthesis via de novo pathway; 5-amino-1-(5-phospho-D-ribosyl)imidazole from N(2)-formyl-N(1)-(5-phospho-D-ribosyl)glycinamide: step 1/2. Its function is as follows. Phosphoribosylformylglycinamidine synthase involved in the purines biosynthetic pathway. Catalyzes the ATP-dependent conversion of formylglycinamide ribonucleotide (FGAR) and glutamine to yield formylglycinamidine ribonucleotide (FGAM) and glutamate. The protein is Phosphoribosylformylglycinamidine synthase of Sodalis glossinidius (strain morsitans).